The following is a 394-amino-acid chain: Phosphoglycerate kinase (394 aa).

Substrate is bound by residues 21 to 23 (DFN), R37, 60 to 63 (HLGR), R119, and R152. Residues K202, E324, and 350–353 (GGDS) each bind ATP.

This sequence belongs to the phosphoglycerate kinase family. As to quaternary structure, monomer.

The protein resides in the cytoplasm. It carries out the reaction (2R)-3-phosphoglycerate + ATP = (2R)-3-phospho-glyceroyl phosphate + ADP. It functions in the pathway carbohydrate degradation; glycolysis; pyruvate from D-glyceraldehyde 3-phosphate: step 2/5. The sequence is that of Phosphoglycerate kinase from Carboxydothermus hydrogenoformans (strain ATCC BAA-161 / DSM 6008 / Z-2901).